Reading from the N-terminus, the 103-residue chain is MSPPWKLFADHLRLTVRLTPNGGRDAFDGIETGSEGETYLKARVTAIPEKGKANKALIALVSKSLGVAKSSITLVSGETARKKILRIEGDPEDLAKKLETLSG.

It belongs to the UPF0235 family.

This is UPF0235 protein RHECIAT_CH0004196 from Rhizobium etli (strain CIAT 652).